Reading from the N-terminus, the 466-residue chain is 5-hydroxytryptamine receptor (466 aa).

The tract at residues 1–21 (MNASRLPGFNDTSQDQPYPTS) is disordered. The Extracellular segment spans residues 1–66 (MNASRLPGFN…TSFVLMAVTS (66 aa)). Asn2, Asn10, Asn29, Asn41, Asn45, and Asn50 each carry an N-linked (GlcNAc...) asparagine glycan. Positions 10 to 21 (NDTSQDQPYPTS) are enriched in polar residues. The helical transmembrane segment at 67-89 (VVLALIILATIVGNVFVIAAIII) threads the bilayer. Topologically, residues 90–99 (ERNLQNVANY) are cytoplasmic. Residues 100 to 121 (LVASLAVADLMVACLVMPLGAV) form a helical membrane-spanning segment. The Extracellular portion of the chain corresponds to 122-136 (YEVSQGWILGPELCD). A disulfide bridge links Cys135 with Cys215. A helical membrane pass occupies residues 137–158 (MWTSSDVLCSSASILHLVAIAT). The Cytoplasmic segment spans residues 159-177 (DRYWAVTDVDYIHIRNEKR). A helical transmembrane segment spans residues 178–200 (IFTMIVLVWGAALVVSLAPQLGW). Residues 201-228 (KDPDYLARITQQQKCLVSQDLAYQIFAT) lie on the Extracellular side of the membrane. A helical membrane pass occupies residues 229 to 250 (MSTFYVPLAVILILYWKIFQTA). Over 251 to 386 (RRRIRRRRDP…AKRERKAAKT (136 aa)) the chain is Cytoplasmic. 2 disordered regions span residues 255–282 (RRRR…QSAR) and 339–360 (VPPS…KPER). Positions 339–353 (VPPSVSPEKSSSTVT) are enriched in low complexity. The chain crosses the membrane as a helical span at residues 387–410 (LAIITGAFVFCWLPFFIMALVMPI). Topologically, residues 411-419 (CQTCVISDY) are extracellular. The chain crosses the membrane as a helical span at residues 420 to 442 (LASFFLWLGYFNSTLNPVIYTIF). Over 443-466 (SPDFRQAFARILFGTHRRRRYKKF) the chain is Cytoplasmic.

Belongs to the G-protein coupled receptor 1 family.

It localises to the cell membrane. Its function is as follows. This is a receptor for 5-hydroxytryptamine (serotonin), a biogenic hormone that function as a neurotransmitter, a hormone, and a mitogen. The sequence is that of 5-hydroxytryptamine receptor from Heliothis virescens (Tobacco budworm moth).